A 273-amino-acid polypeptide reads, in one-letter code: Large ribosomal subunit protein uL2 (273 aa).

The tract at residues 224–263 (AMNPVDHPHGGGEGRNFGKHPVTPWGLQTKGKKTRKNKRT) is disordered. Residues 253-263 (KGKKTRKNKRT) show a composition bias toward basic residues.

The protein belongs to the universal ribosomal protein uL2 family. In terms of assembly, part of the 50S ribosomal subunit. Forms a bridge to the 30S subunit in the 70S ribosome.

In terms of biological role, one of the primary rRNA binding proteins. Required for association of the 30S and 50S subunits to form the 70S ribosome, for tRNA binding and peptide bond formation. It has been suggested to have peptidyltransferase activity; this is somewhat controversial. Makes several contacts with the 16S rRNA in the 70S ribosome. This is Large ribosomal subunit protein uL2 from Buchnera aphidicola subsp. Schizaphis graminum (strain Sg).